Reading from the N-terminus, the 177-residue chain is NADH-quinone oxidoreductase subunit B (177 aa).

[4Fe-4S] cluster is bound by residues Cys-56, Cys-57, Cys-121, and Cys-151.

Belongs to the complex I 20 kDa subunit family. As to quaternary structure, NDH-1 is composed of 14 different subunits. Subunits NuoB, C, D, E, F, and G constitute the peripheral sector of the complex. Requires [4Fe-4S] cluster as cofactor.

Its subcellular location is the cell inner membrane. The catalysed reaction is a quinone + NADH + 5 H(+)(in) = a quinol + NAD(+) + 4 H(+)(out). In terms of biological role, NDH-1 shuttles electrons from NADH, via FMN and iron-sulfur (Fe-S) centers, to quinones in the respiratory chain. The immediate electron acceptor for the enzyme in this species is believed to be ubiquinone. Couples the redox reaction to proton translocation (for every two electrons transferred, four hydrogen ions are translocated across the cytoplasmic membrane), and thus conserves the redox energy in a proton gradient. The protein is NADH-quinone oxidoreductase subunit B of Rhodobacter capsulatus (Rhodopseudomonas capsulata).